The sequence spans 344 residues: Anthranilate phosphoribosyltransferase (344 aa).

Residues Gly-84, 87–88 (GD), Ser-92, 94–97 (NIST), 112–120 (KHGNRSASG), and Ser-124 contribute to the 5-phospho-alpha-D-ribose 1-diphosphate site. Position 84 (Gly-84) interacts with anthranilate. A Mg(2+)-binding site is contributed by Ser-96. Anthranilate is bound at residue Asn-115. An anthranilate-binding site is contributed by Arg-170. Positions 229 and 230 each coordinate Mg(2+).

It belongs to the anthranilate phosphoribosyltransferase family. In terms of assembly, homodimer. Mg(2+) is required as a cofactor.

The catalysed reaction is N-(5-phospho-beta-D-ribosyl)anthranilate + diphosphate = 5-phospho-alpha-D-ribose 1-diphosphate + anthranilate. Its pathway is amino-acid biosynthesis; L-tryptophan biosynthesis; L-tryptophan from chorismate: step 2/5. Catalyzes the transfer of the phosphoribosyl group of 5-phosphorylribose-1-pyrophosphate (PRPP) to anthranilate to yield N-(5'-phosphoribosyl)-anthranilate (PRA). The chain is Anthranilate phosphoribosyltransferase from Synechococcus sp. (strain RCC307).